The primary structure comprises 115 residues: Large ribosomal subunit protein bL19 (115 aa).

It belongs to the bacterial ribosomal protein bL19 family.

Functionally, this protein is located at the 30S-50S ribosomal subunit interface and may play a role in the structure and function of the aminoacyl-tRNA binding site. This chain is Large ribosomal subunit protein bL19, found in Baumannia cicadellinicola subsp. Homalodisca coagulata.